Here is a 137-residue protein sequence, read N- to C-terminus: Large ribosomal subunit protein uL16 (137 aa).

The protein belongs to the universal ribosomal protein uL16 family. Part of the 50S ribosomal subunit.

In terms of biological role, binds 23S rRNA and is also seen to make contacts with the A and possibly P site tRNAs. This chain is Large ribosomal subunit protein uL16, found in Stenotrophomonas maltophilia (strain K279a).